The following is a 557-amino-acid chain: Selenoprotein N (557 aa).

Positions 1-21 are enriched in basic and acidic residues; it reads MAADVDKTPAGEQKDDHEDRG. The disordered stretch occupies residues 1-28; that stretch reads MAADVDKTPAGEQKDDHEDRGTPSSRRG. Residues 35-55 form a helical membrane-spanning segment; the sequence is ISSLFIIAAIPVIGVCIKYYL. Residue Sec430 is a non-standard amino acid, selenocysteine. Asn451 and Asn499 each carry an N-linked (GlcNAc...) asparagine glycan.

In terms of assembly, interacts with ryr3.

Its subcellular location is the endoplasmic reticulum membrane. In terms of biological role, plays an important role in cell protection against oxidative stress and in the regulation of redox-related calcium homeostasis. Regulates the calcium level of the ER by protecting the calcium pump ATP2A2 against the oxidoreductase ERO1A-mediated oxidative damage. Acts as a modulator of ryanodine receptor (RyR) activity: protects RyR from oxidation due to increased oxidative stress, or directly controls the RyR redox state, regulating the RyR-mediated calcium mobilization required for normal muscle development and differentiation. Plays an important role in muscle development and differentiation during early development. Required for development of the slow muscle fiber lineage. Required for the correct organization and attachment of the myofibrils, as well as for the continuity and integrity of the connective tissue that forms the myoseptum. The protein is Selenoprotein N of Danio rerio (Zebrafish).